We begin with the raw amino-acid sequence, 124 residues long: Seripauperin-3 (124 aa).

The chain crosses the membrane as a helical span at residues 7 to 24; that stretch reads IAAGVAAIAAGIAAAPAT.

The protein belongs to the SRP1/TIP1 family. Seripauperin subfamily.

It is found in the membrane. This Saccharomyces cerevisiae (strain ATCC 204508 / S288c) (Baker's yeast) protein is Seripauperin-3 (PAU3).